Reading from the N-terminus, the 210-residue chain is Uridine kinase (210 aa).

Glycine 13–threonine 20 contributes to the ATP binding site.

Belongs to the uridine kinase family.

The protein resides in the cytoplasm. It catalyses the reaction uridine + ATP = UMP + ADP + H(+). The enzyme catalyses cytidine + ATP = CMP + ADP + H(+). It functions in the pathway pyrimidine metabolism; CTP biosynthesis via salvage pathway; CTP from cytidine: step 1/3. The protein operates within pyrimidine metabolism; UMP biosynthesis via salvage pathway; UMP from uridine: step 1/1. This chain is Uridine kinase, found in Oceanobacillus iheyensis (strain DSM 14371 / CIP 107618 / JCM 11309 / KCTC 3954 / HTE831).